A 543-amino-acid polypeptide reads, in one-letter code: Phosphoribosylaminoimidazole carboxylase (543 aa).

In terms of domain architecture, ATP-grasp spans 110–297 (KEHLIKNGIA…QFEAHVRAIT (188 aa)). Residue 137–192 (GAKYGFPYMLKSRTMAYDGRGNFVVKDKSYIPEALKVLDDRPLYAEKWAPFSKELA) coordinates ATP.

In the C-terminal section; belongs to the AIR carboxylase family. Class I subfamily.

The enzyme catalyses 5-amino-1-(5-phospho-D-ribosyl)imidazole-4-carboxylate + H(+) = 5-amino-1-(5-phospho-beta-D-ribosyl)imidazole + CO2. It functions in the pathway purine metabolism; IMP biosynthesis via de novo pathway; 5-amino-1-(5-phospho-D-ribosyl)imidazole-4-carboxylate from 5-amino-1-(5-phospho-D-ribosyl)imidazole (carboxylase route): step 1/1. The sequence is that of Phosphoribosylaminoimidazole carboxylase (ADE1) from Ogataea methanolica (Yeast).